A 443-amino-acid polypeptide reads, in one-letter code: Serine--tRNA ligase (443 aa).

L-serine is bound at residue 246–248; the sequence is TAE. 277-279 lines the ATP pocket; it reads RAE. Residue Glu300 coordinates L-serine. Position 367–370 (367–370) interacts with ATP; sequence EISS. L-serine is bound at residue Ser402.

Belongs to the class-II aminoacyl-tRNA synthetase family. Type-1 seryl-tRNA synthetase subfamily. As to quaternary structure, homodimer. The tRNA molecule binds across the dimer.

Its subcellular location is the cytoplasm. It catalyses the reaction tRNA(Ser) + L-serine + ATP = L-seryl-tRNA(Ser) + AMP + diphosphate + H(+). The enzyme catalyses tRNA(Sec) + L-serine + ATP = L-seryl-tRNA(Sec) + AMP + diphosphate + H(+). The protein operates within aminoacyl-tRNA biosynthesis; selenocysteinyl-tRNA(Sec) biosynthesis; L-seryl-tRNA(Sec) from L-serine and tRNA(Sec): step 1/1. Catalyzes the attachment of serine to tRNA(Ser). Is also able to aminoacylate tRNA(Sec) with serine, to form the misacylated tRNA L-seryl-tRNA(Sec), which will be further converted into selenocysteinyl-tRNA(Sec). The protein is Serine--tRNA ligase of Bradyrhizobium diazoefficiens (strain JCM 10833 / BCRC 13528 / IAM 13628 / NBRC 14792 / USDA 110).